Reading from the N-terminus, the 1342-residue chain is Receptor tyrosine-protein kinase erbB-3 (1342 aa).

The N-terminal stretch at 1–19 (MRANDALQVLGLLFSLARG) is a signal peptide. Residues 20–643 (SEVGNSQAVC…LVLIGKTHLT (624 aa)) lie on the Extracellular side of the membrane. Cysteines 29 and 56 form a disulfide. Asn126 carries an N-linked (GlcNAc...) asparagine glycan. 12 disulfide bridges follow: Cys156-Cys183, Cys186-Cys194, Cys190-Cys202, Cys210-Cys218, Cys214-Cys226, Cys227-Cys235, Cys231-Cys243, Cys246-Cys255, Cys259-Cys286, Cys290-Cys301, Cys305-Cys320, and Cys323-Cys327. N-linked (GlcNAc...) asparagine glycosylation occurs at Asn250. N-linked (GlcNAc...) asparagine glycosylation is found at Asn353, Asn408, Asn414, Asn437, and Asn469. 10 disulfides stabilise this stretch: Cys500/Cys509, Cys504/Cys517, Cys520/Cys529, Cys533/Cys549, Cys552/Cys565, Cys556/Cys573, Cys576/Cys585, Cys589/Cys610, Cys613/Cys621, and Cys617/Cys629. N-linked (GlcNAc...) asparagine glycosylation is present at Asn522. Residue Asn566 is glycosylated (N-linked (GlcNAc...) asparagine). Asn616 carries N-linked (GlcNAc...) asparagine glycosylation. The chain crosses the membrane as a helical span at residues 644 to 664 (MALTVIAGLVVIFMMLGGTFL). Residues 665 to 1342 (YWRGRRIQNK…LFPKANAQRT (678 aa)) are Cytoplasmic-facing. At Ser686 the chain carries Phosphoserine. The Protein kinase domain maps to 709 to 966 (LRKLKVLGSG…TFKELANEFT (258 aa)). ATP contacts are provided by residues 715-723 (LGSGVFGTV), Lys742, 788-790 (QYL), and 834-839 (NLAARN). The active-site Proton acceptor is Asn834. Disordered stretches follow at residues 980-999 (RESG…TNKK) and 1033-1152 (LPVG…PGLE). Ser982 carries the phosphoserine modification. Over residues 1042-1075 (RGSQSLLSPSSGYMPMNQGNLGESCQESAVSGSS) the composition is skewed to polar residues.

This sequence belongs to the protein kinase superfamily. Tyr protein kinase family. EGF receptor subfamily. In terms of assembly, monomer and homodimer. Heterodimer with each of the other ERBB receptors (Potential). Interacts with CSPG5. Interacts with GRB7. Interacts with MUC1. Interacts with MYOC. Interacts with isoform 2 of PA2G4. Found in a ternary complex with NRG1 and ITGAV:ITGB3 or ITGA6:ITGB4. In terms of processing, autophosphorylated. Ligand-binding increases phosphorylation on tyrosine residues and promotes its association with the p85 subunit of phosphatidylinositol 3-kinase. In terms of tissue distribution, epithelial tissues and brain.

Its subcellular location is the cell membrane. The protein localises to the secreted. The enzyme catalyses L-tyrosyl-[protein] + ATP = O-phospho-L-tyrosyl-[protein] + ADP + H(+). Its function is as follows. Tyrosine-protein kinase that plays an essential role as cell surface receptor for neuregulins. Binds to neuregulin-1 (NRG1) and is activated by it; ligand-binding increases phosphorylation on tyrosine residues and promotes its association with the p85 subunit of phosphatidylinositol 3-kinase. May also be activated by CSPG5. Involved in the regulation of myeloid cell differentiation. This Homo sapiens (Human) protein is Receptor tyrosine-protein kinase erbB-3 (ERBB3).